The primary structure comprises 190 residues: UPF0725 protein At2g20625 (190 aa).

It belongs to the UPF0725 (EMB2204) family.

This is UPF0725 protein At2g20625 from Arabidopsis thaliana (Mouse-ear cress).